The chain runs to 315 residues: MSESLRIIFAGTPDFAARHLDALLSSGHNVVGVFTQPDRPAGRGKKLMPSPVKVLAEEKGLPVFQPVSLRPQENQQLVADLQADVMVVVAYGLILPKAVLEMPRLGCINVHGSLLPRWRGAAPIQRSLWAGDAETGVTIMQMDVGLDTGDMLYKLSCPITAEDTSGTLYDKLAELGPQGLITTLKQLADGTAKPEVQDKTLVTYAEKLSKEEARIDWSLSAAQLERCIRAFNPWPMSWLEIERQPVKVWKASVIDTATNAAPGTILEANKQGIQVATGDGILNLLSLQPAGKKAMSAQDLLNSRREWFVPGNRLA.

113-116 is a binding site for (6S)-5,6,7,8-tetrahydrofolate; sequence SLLP.

Belongs to the Fmt family.

The catalysed reaction is L-methionyl-tRNA(fMet) + (6R)-10-formyltetrahydrofolate = N-formyl-L-methionyl-tRNA(fMet) + (6S)-5,6,7,8-tetrahydrofolate + H(+). Attaches a formyl group to the free amino group of methionyl-tRNA(fMet). The formyl group appears to play a dual role in the initiator identity of N-formylmethionyl-tRNA by promoting its recognition by IF2 and preventing the misappropriation of this tRNA by the elongation apparatus. This Shigella boydii serotype 18 (strain CDC 3083-94 / BS512) protein is Methionyl-tRNA formyltransferase.